Consider the following 219-residue polypeptide: Auxin-responsive protein IAA24 (219 aa).

The EAR-like (transcriptional repression) motif lies at 24 to 28; sequence LCLRL. Disordered regions lie at residues 24–88 and 109–128; these read LCLR…AKAQ and AAAA…QQGG. Over residues 60–71 the composition is skewed to polar residues; the sequence is STDSMASGTGTS. In terms of domain architecture, PB1 spans 129-215; it reads GLYVKVSMDG…SCKKLRIMKG (87 aa).

Belongs to the Aux/IAA family. As to quaternary structure, homodimers and heterodimers. As to expression, highly expressed in flowers. Expressed in seedlings.

The protein resides in the nucleus. In terms of biological role, aux/IAA proteins are short-lived transcriptional factors that function as repressors of early auxin response genes at low auxin concentrations. The polypeptide is Auxin-responsive protein IAA24 (IAA24) (Oryza sativa subsp. japonica (Rice)).